A 161-amino-acid chain; its full sequence is Cyclic pyranopterin monophosphate synthase (161 aa).

Residues 75–77 (LCH) and 113–114 (ME) each bind substrate. Residue D128 is part of the active site.

Belongs to the MoaC family. Homohexamer; trimer of dimers.

It catalyses the reaction (8S)-3',8-cyclo-7,8-dihydroguanosine 5'-triphosphate = cyclic pyranopterin phosphate + diphosphate. It participates in cofactor biosynthesis; molybdopterin biosynthesis. Catalyzes the conversion of (8S)-3',8-cyclo-7,8-dihydroguanosine 5'-triphosphate to cyclic pyranopterin monophosphate (cPMP). The polypeptide is Cyclic pyranopterin monophosphate synthase (Salmonella heidelberg (strain SL476)).